Reading from the N-terminus, the 421-residue chain is Histidine--tRNA ligase (421 aa).

The protein belongs to the class-II aminoacyl-tRNA synthetase family. As to quaternary structure, homodimer.

It is found in the cytoplasm. The enzyme catalyses tRNA(His) + L-histidine + ATP = L-histidyl-tRNA(His) + AMP + diphosphate + H(+). The polypeptide is Histidine--tRNA ligase (Francisella tularensis subsp. holarctica (strain LVS)).